Consider the following 127-residue polypeptide: Large-conductance mechanosensitive channel (127 aa).

Transmembrane regions (helical) follow at residues 9 to 29 (EFAM…GVAF), 32 to 52 (IVTA…LGGI), and 75 to 95 (VIDF…INLL).

The protein belongs to the MscL family. In terms of assembly, homopentamer.

The protein localises to the cell inner membrane. In terms of biological role, channel that opens in response to stretch forces in the membrane lipid bilayer. May participate in the regulation of osmotic pressure changes within the cell. The polypeptide is Large-conductance mechanosensitive channel (Legionella pneumophila (strain Paris)).